Reading from the N-terminus, the 548-residue chain is Peptide chain release factor 3 (548 aa).

A tr-type G domain is found at glutamate 23 to glutamine 290. GTP is bound by residues serine 32–threonine 39, aspartate 100–histidine 104, and asparagine 154–aspartate 157.

The protein belongs to the TRAFAC class translation factor GTPase superfamily. Classic translation factor GTPase family. PrfC subfamily.

It localises to the cytoplasm. In terms of biological role, increases the formation of ribosomal termination complexes and stimulates activities of RF-1 and RF-2. It binds guanine nucleotides and has strong preference for UGA stop codons. It may interact directly with the ribosome. The stimulation of RF-1 and RF-2 is significantly reduced by GTP and GDP, but not by GMP. This is Peptide chain release factor 3 from Aromatoleum aromaticum (strain DSM 19018 / LMG 30748 / EbN1) (Azoarcus sp. (strain EbN1)).